We begin with the raw amino-acid sequence, 126 residues long: MKNLFIFLSLMMMFVLTACGGSKYDDAIDDVISQYKEHKGNDTEINIKRENAIVRVYEGGKYIQFAFYMPDNSSRELTTFKYYEKFGDKYEKMTDMPGNGENDRLGLSKKTPDYEEVKGEETELEE.

Residues 1–27 (MKNLFIFLSLMMMFVLTACGGSKYDDA) form the signal peptide. The segment at 93-126 (MTDMPGNGENDRLGLSKKTPDYEEVKGEETELEE) is disordered. Over residues 101-126 (ENDRLGLSKKTPDYEEVKGEETELEE) the composition is skewed to basic and acidic residues.

This is an uncharacterized protein from Bacillus subtilis (strain 168).